Here is a 339-residue protein sequence, read N- to C-terminus: MSGSYWTSMQRQKWQHTKPSLARERQRLWVMECQLFPQGLNIIVDSKPNSADSSNGNAANNGGGNGRSQLVATTKNIPITHRDLHYDKDYNLRIYCYFLIMKLGRRLNIRQYALATAHIYLSRFLLKASVREVNLYLLVTTCVYLACKVEECPQYIRTLVSEARSLWPEFIPPDPTKVTEFEFYLIEELQCYLIVHHPYKSMEQIVEALKEEPFKLTFTSDELQNCWSLINDSFINDVHLTYAPHIIAMACLFITVSIQGSNTKELSLTSAVTETLTSQSSLTPQQQTFFRFLAESHVDLEEVMDTIQQQIILYDHWDRYHEPWIKYLLHTLYLRPLSA.

The disordered stretch occupies residues 48-67 (PNSADSSNGNAANNGGGNGR). The segment covering 49–60 (NSADSSNGNAAN) has biased composition (low complexity). The 102-residue stretch at 93 to 194 (RIYCYFLIMK…LIEELQCYLI (102 aa)) folds into the Cyclin N-terminal domain.

Belongs to the cyclin family. Cyclin C subfamily. In terms of assembly, component of the SRB8-11 complex, a regulatory module of the Mediator complex.

It localises to the nucleus. In terms of biological role, component of the SRB8-11 complex. The SRB8-11 complex is a regulatory module of the Mediator complex which is itself involved in regulation of basal and activated RNA polymerase II-dependent transcription. The SRB8-11 complex may be involved in the transcriptional repression of a subset of genes regulated by Mediator. It may inhibit the association of the Mediator complex with RNA polymerase II to form the holoenzyme complex. The SRB8-11 complex phosphorylates the C-terminal domain (CTD) of the largest subunit of RNA polymerase II. The polypeptide is RNA polymerase II holoenzyme cyclin-like subunit (SSN8) (Candida glabrata (strain ATCC 2001 / BCRC 20586 / JCM 3761 / NBRC 0622 / NRRL Y-65 / CBS 138) (Yeast)).